The chain runs to 795 residues: MENGGAGTLQIRQVLLFFVLLGMSQAGSETGNFLVMEELQSGSFVGNLAKTLGLEVSELSSRGARVVSNDNKECLQLDTNTGDLLLREMLDREELCGSNEPCVLYFQVLMKNPTQFLQIELQVRDINDHSPVFLEKEMLLEIPENSPVGAVFLLESAKDLDVGINAVKSYTINPNSHFHVKIRVNPDNRKYPELVLDKALDYEERPELSFILTALDGGSPPRSGTALVRVVVVDINDNSPEFEQAFYEVKILENSILGSLVVTVSAWDLDSGTNSELSYTFSHASEDIRKTFEINQKSGDITLTAPLDFEAIESYSIIIQATDGGGLFGKSTVRIQVMDVNDNAPEITVSSITSPIPENTPETVVMVFRIRDRDSGDNGKMVCSIPEDIPFVLKSSVNNYYTLETERPLDRESRAEYNITITVTDLGTPRLKTEHNITVLVSDVNDNAPAFTQTSYALFVRENNSPALHIGSISATDRDSGTNAQVNYSLLPSQDPHLPLASLVSINADNGHLFALRSLDYEALQGFQFRVGATDHGSPALSSEALVRVLVLDANDNSPFVLYPLQNGSAPCTELVPWAAEPGYLVTKVVAVDGDSGQNAWLSYQLLKATEPGLFGVWAHNGEVRTARLLSERDAAKHRLVVLVKDNGEPPRSATATLHVLLVDGFSQPYLPLPEAAPAQAQADSLTVYLVVALASVSSLFLFSVLLFVAVRLCRRSRAAPVGRCSVPEGPFPGHLVDVSGTGTLSQSYHYEVCVTGGSRSNKFKFLKPIIPNFLPQSTGSEVEENPPFQNNLGF.

A signal peptide spans 1-26; it reads MENGGAGTLQIRQVLLFFVLLGMSQA. Residues 27-690 are Extracellular-facing; it reads GSETGNFLVM…AQADSLTVYL (664 aa). 5 Cadherin domains span residues 35–133, 138–242, 247–347, 352–451, and 456–561; these read VMEE…SPVF, MLLE…SPEF, YEVK…APEI, ITSP…APAF, and YALF…SPFV. 4 N-linked (GlcNAc...) asparagine glycosylation sites follow: N418, N436, N487, and N567. In terms of domain architecture, Cadherin 6 spans 568–671; that stretch reads GSAPCTELVP…LVDGFSQPYL (104 aa). Residues 691-711 form a helical membrane-spanning segment; sequence VVALASVSSLFLFSVLLFVAV. Residues 712–795 lie on the Cytoplasmic side of the membrane; the sequence is RLCRRSRAAP…NPPFQNNLGF (84 aa).

It localises to the cell membrane. Functionally, potential calcium-dependent cell-adhesion protein. May be involved in the establishment and maintenance of specific neuronal connections in the brain. This Homo sapiens (Human) protein is Protocadherin beta-12 (PCDHB12).